The sequence spans 1241 residues: Plasma membrane calcium-transporting ATPase 4 (1241 aa).

Residues Met-1–Thr-92 lie on the Cytoplasmic side of the membrane. Ser-13 carries the phosphoserine modification. A helical transmembrane segment spans residues Phe-93 to Ala-113. Residues Ile-114–Ile-150 are Extracellular-facing. The chain crosses the membrane as a helical span at residues Glu-151–Trp-171. Residues Ser-172–Leu-356 lie on the Cytoplasmic side of the membrane. The disordered stretch occupies residues Glu-294 to Gly-318. Ser-328 carries the post-translational modification Phosphoserine. A helical membrane pass occupies residues Thr-357–Phe-376. Residues Ile-377–Phe-409 are Extracellular-facing. The helical transmembrane segment at Phe-410 to Leu-427 threads the bilayer. Residues Ala-428–Ile-840 are Cytoplasmic-facing. Residue Asp-465 is the 4-aspartylphosphate intermediate of the active site. Residues Asp-785 and Asp-789 each coordinate Mg(2+). Residues Ser-841–Thr-860 traverse the membrane as a helical segment. Residues Gly-861 to Leu-870 are Extracellular-facing. A helical membrane pass occupies residues Lys-871 to Ala-891. Topologically, residues Thr-892–Leu-911 are cytoplasmic. A helical membrane pass occupies residues Ile-912 to Leu-934. At Val-935–Leu-952 the chain is on the extracellular side. A helical membrane pass occupies residues His-953–Asn-974. Topologically, residues Glu-975–Arg-993 are cytoplasmic. A helical membrane pass occupies residues Asn-994 to Gly-1015. The Extracellular segment spans residues Gly-1016–Ser-1025. Residues Leu-1026–Ser-1047 traverse the membrane as a helical segment. At Ala-1048–Val-1241 the chain is on the cytoplasmic side. The interval Leu-1086–Gln-1103 is calmodulin-binding subdomain A. Thr-1102 bears the Phosphothreonine; by PKC mark. Positions Ile-1104–Gly-1113 are calmodulin-binding subdomain B.

It belongs to the cation transport ATPase (P-type) (TC 3.A.3) family. Type IIB subfamily. Interacts with PDZD11. Interacts with SLC35G1 and STIM1. Interacts with calmodulin. Isoform XB is the most abundant isoform and is expressed ubiquitously. Isoforms containing segment Z have only been detected in heart, while isoforms containing segment a have been found in heart, stomach and brain cortex.

It is found in the cell membrane. Its subcellular location is the cell projection. The protein localises to the cilium. It localises to the flagellum membrane. The enzyme catalyses Ca(2+)(in) + ATP + H2O = Ca(2+)(out) + ADP + phosphate + H(+). Activated by calcium/calmodulin. Its function is as follows. Calcium/calmodulin-regulated and magnesium-dependent enzyme that catalyzes the hydrolysis of ATP coupled with the transport of calcium out of the cell. By regulating sperm cell calcium homeostasis, may play a role in sperm motility. The protein is Plasma membrane calcium-transporting ATPase 4 of Homo sapiens (Human).